Consider the following 1196-residue polypeptide: Sorbin and SH3 domain-containing protein 2 (1196 aa).

2 disordered regions span residues 25-57 and 75-95; these read VQSS…ETLN and PNLQ…GNSG. Serine 27, serine 28, and serine 40 each carry phosphoserine. Over residues 83-92 the composition is skewed to polar residues; it reads PTQSHITING. A phosphoserine mark is found at serine 130 and serine 143. Methionine 148 carries the alanine amide modification. The SoHo domain occupies 166–227; the sequence is VIKAPHYPGI…YNTPYTYNAG (62 aa). Residues 235 to 247 show a composition bias toward polar residues; the sequence is AQSHPAAKTQTYR. Disordered regions lie at residues 235–314 and 329–407; these read AQSH…EPGK and SSID…GDDS. Basic and acidic residues-rich tracts occupy residues 252–262 and 276–312; these read SHSDNGTDAFK and RPRD…EYEP. Serine 254 is subject to Phosphoserine. A compositionally biased stretch (polar residues) spans 329-343; that stretch reads SSIDRSLERPSSSAS. Phosphoserine is present on residues serine 334, serine 340, serine 343, and serine 354. A Phosphothreonine modification is found at threonine 372. Phosphoserine is present on serine 382. Residues 382–399 are compositionally biased toward low complexity; sequence SSSTFTTSFISSSPSSPS. Threonine 387 carries the post-translational modification Phosphothreonine. Residues serine 392, serine 393, serine 394, serine 396, serine 397, serine 399, serine 478, serine 589, serine 592, serine 645, serine 648, serine 844, and serine 938 each carry the phosphoserine modification. A disordered region spans residues 929–958; the sequence is QDHESPRSYSSTLTDLGRSVSRERRGTPEK. The span at 948–958 shows a compositional bias: basic and acidic residues; the sequence is VSRERRGTPEK. SH3 domains lie at 959 to 1018 and 1034 to 1095; these read EVKL…KLTP and GEIG…VVKR. Phosphoserine occurs at positions 1113 and 1119. Positions 1137–1196 constitute an SH3 3 domain; sequence GGGEPFQALYNYTPRNEDELELRESDVVDVMEKCDDGWFVGTSRRTKFFGTFPGNYVKRL.

Interacts with ABL1/c-Abl, ABL2/v-Abl/Arg, ACTN, CBL and PALLD. Interacts with ABL, CBL, DNM1, DNM2, FLOT1, AFDN, PTK2B/PYK2, SAPAP, SPTAN1, SYNJ1, SYNJ2, VCL/vinculin and WASF. Interacts with PTPN12 and WASF1 via its SH3 domains; this interaction may mediate the partial PTPN12 and WASF1 translocation to focal adhesion sites. Ubiquitinated by CBL. Expressed in brain; found in synapses in cerebellum.

It localises to the cytoplasm. Its subcellular location is the perinuclear region. The protein resides in the apical cell membrane. The protein localises to the cell junction. It is found in the focal adhesion. It localises to the cell projection. Its subcellular location is the lamellipodium. Functionally, adapter protein that plays a role in the assembling of signaling complexes, being a link between ABL kinases and actin cytoskeleton. Can form complex with ABL1 and CBL, thus promoting ubiquitination and degradation of ABL1. May play a role in the regulation of pancreatic cell adhesion, possibly by acting on WASF1 phosphorylation, enhancing phosphorylation by ABL1, as well as dephosphorylation by PTPN12. Isoform 2 increases water and sodium absorption in the intestine and gall-bladder. In Rattus norvegicus (Rat), this protein is Sorbin and SH3 domain-containing protein 2 (Sorbs2).